Here is a 365-residue protein sequence, read N- to C-terminus: Probable caffeine synthase 2 (365 aa).

Y19 is a binding site for S-adenosyl-L-homocysteine. Caffeine is bound at residue T26. S-adenosyl-L-homocysteine-binding residues include C62, D99, L100, S134, and F135. The caffeine site is built by Y152, H155, and W156. N173 contacts Mg(2+). R221 is a caffeine binding site. Mg(2+) is bound by residues D259, F261, and N262. Residue F317 coordinates caffeine.

The protein belongs to the methyltransferase superfamily. Type-7 methyltransferase family. Mg(2+) serves as cofactor.

It catalyses the reaction 7-methylxanthine + S-adenosyl-L-methionine = theobromine + S-adenosyl-L-homocysteine + H(+). It carries out the reaction theobromine + S-adenosyl-L-methionine = caffeine + S-adenosyl-L-homocysteine + H(+). The catalysed reaction is 1,7-dimethylxanthine + S-adenosyl-L-methionine = caffeine + S-adenosyl-L-homocysteine + H(+). The protein operates within alkaloid biosynthesis. Its function is as follows. May be involved in the biosynthesis of caffeine. Catalyzes the conversion of 7-methylxanthine (7mX) to theobromine and of theobromine to caffeine. Has 1-N-methylation activity. The polypeptide is Probable caffeine synthase 2 (Camellia sinensis (Tea plant)).